The sequence spans 78 residues: Neurotoxin 3FTx-LK (78 aa).

A signal peptide spans 1–21 (MKTLLLTLVVVTIVCLDLGYT). Intrachain disulfides connect cysteine 24/cysteine 42, cysteine 35/cysteine 60, cysteine 64/cysteine 70, and cysteine 71/cysteine 76.

In terms of tissue distribution, expressed by the venom gland.

It localises to the secreted. Its function is as follows. Blocks both the muscle-twitch response to nerve stimulation and the response to exogenous acetylcholine. This Bungarus fasciatus (Banded krait) protein is Neurotoxin 3FTx-LK.